We begin with the raw amino-acid sequence, 76 residues long: Small ribosomal subunit protein bS18 (76 aa).

Belongs to the bacterial ribosomal protein bS18 family. Part of the 30S ribosomal subunit. Forms a tight heterodimer with protein bS6.

Its function is as follows. Binds as a heterodimer with protein bS6 to the central domain of the 16S rRNA, where it helps stabilize the platform of the 30S subunit. In Tolumonas auensis (strain DSM 9187 / NBRC 110442 / TA 4), this protein is Small ribosomal subunit protein bS18.